A 179-amino-acid polypeptide reads, in one-letter code: Large ribosomal subunit protein bL17 (179 aa).

Positions 127–179 are disordered; it reads TDTLPDTVIDTGPDSAPDPVPGSEPGSAAGDLPDADTAPADPGESSSNQRVIR. Positions 154-168 are enriched in low complexity; the sequence is AAGDLPDADTAPADP. Positions 170–179 are enriched in polar residues; that stretch reads ESSSNQRVIR.

It belongs to the bacterial ribosomal protein bL17 family. As to quaternary structure, part of the 50S ribosomal subunit. Contacts protein L32.

This Tropheryma whipplei (strain TW08/27) (Whipple's bacillus) protein is Large ribosomal subunit protein bL17.